The sequence spans 23 residues: Endochitinase B (23 aa).

The protein belongs to the glycosyl hydrolase 19 family. Chitinase class I subfamily.

The catalysed reaction is Random endo-hydrolysis of N-acetyl-beta-D-glucosaminide (1-&gt;4)-beta-linkages in chitin and chitodextrins.. Functionally, defense against chitin-containing fungal pathogens. This Pisum sativum (Garden pea) protein is Endochitinase B.